A 248-amino-acid chain; its full sequence is NADP-dependent 3-hydroxy acid dehydrogenase YdfG (248 aa).

NADP(+)-binding positions include 7 to 12 (GATAGF), 32 to 33 (RR), 54 to 55 (DV), and Asn-81. Ser-134 provides a ligand contact to substrate. Residues Tyr-147, Lys-151, and 177 to 185 (PGLVGGTEF) each bind NADP(+). The active-site Proton acceptor is Tyr-147.

It belongs to the short-chain dehydrogenases/reductases (SDR) family. In terms of assembly, homotetramer.

It catalyses the reaction 3-hydroxypropanoate + NADP(+) = 3-oxopropanoate + NADPH + H(+). It carries out the reaction L-allo-threonine + NADP(+) = aminoacetone + CO2 + NADPH. NADP-dependent dehydrogenase with broad substrate specificity acting on 3-hydroxy acids. Catalyzes the NADP-dependent oxidation of L-allo-threonine to L-2-amino-3-keto-butyrate, which is spontaneously decarboxylated into aminoacetone. Also acts on D-threonine, L-serine, D-serine, D-3-hydroxyisobutyrate, L-3-hydroxyisobutyrate, D-glycerate and L-glycerate. Able to catalyze the reduction of the malonic semialdehyde to 3-hydroxypropionic acid. YdfG is apparently supplementing RutE, the presumed malonic semialdehyde reductase involved in pyrimidine degradation since both are able to detoxify malonic semialdehyde. This chain is NADP-dependent 3-hydroxy acid dehydrogenase YdfG, found in Escherichia coli O157:H7.